A 237-amino-acid polypeptide reads, in one-letter code: MTKQKQYVSDVNLTVCGSNKPSSTPGKDIEYFGLIPVDLFISNILSRLPLKSKAKCRCVSKLWSSIIRRPNYNQLFPIKSPAPRILFTIEYAGILFFYSSPQPHNPDENSSLVATLHQNTGNTKFYEICGPVCGRVLCRQYNSVGVIYNPITGESSNLPKLSLKGINKSEWLCDKARYSFGYDPIEKQLKVLCITWLRTGSEHLSNEYQVLTLGTENKKTLLEKDSRLCNSFFLGQY.

Positions 41–72 (ISNILSRLPLKSKAKCRCVSKLWSSIIRRPNY) constitute an F-box domain.

The chain is Probable F-box protein At1g53815 from Arabidopsis thaliana (Mouse-ear cress).